The sequence spans 327 residues: BTB/POZ domain-containing protein KCTD12 (327 aa).

The interval 1 to 28 (MALADSARGLPNGGGGGGGSGSSSSSAE) is disordered. Alanine 2 carries the post-translational modification N-acetylalanine. Residues 11-21 (PNGGGGGGGSG) are compositionally biased toward gly residues. Tyrosine 119 bears the Phosphotyrosine mark. The tract at residues 129-204 (LGAPQQPGPG…PLLTPSQSLD (76 aa)) is disordered. Residues serine 153, serine 173, and serine 187 each carry the phosphoserine modification. Threonine 198 carries the phosphothreonine modification. Residue serine 202 is modified to Phosphoserine.

As to quaternary structure, interacts as a tetramer with GABBR1 and GABBR2. Expressed in the brain, mainly in the hippocampus and cerebellum.

The protein resides in the presynaptic cell membrane. It localises to the postsynaptic cell membrane. Its function is as follows. Auxiliary subunit of GABA-B receptors that determine the pharmacology and kinetics of the receptor response. Increases agonist potency and markedly alter the G-protein signaling of the receptors by accelerating onset and promoting desensitization. The protein is BTB/POZ domain-containing protein KCTD12 (Kctd12) of Mus musculus (Mouse).